The sequence spans 398 residues: S-adenosylmethionine synthase (398 aa).

Position 136–141 (136–141 (GTGSSD)) interacts with ATP.

Belongs to the AdoMet synthase 2 family. Mg(2+) serves as cofactor.

It catalyses the reaction L-methionine + ATP + H2O = S-adenosyl-L-methionine + phosphate + diphosphate. The protein operates within amino-acid biosynthesis; S-adenosyl-L-methionine biosynthesis; S-adenosyl-L-methionine from L-methionine: step 1/1. Its function is as follows. Catalyzes the formation of S-adenosylmethionine from methionine and ATP. This is S-adenosylmethionine synthase from Methanosarcina barkeri (strain Fusaro / DSM 804).